The chain runs to 369 residues: Protein RIC-3 (369 aa).

A signal peptide spans 1–28 (MAYSTVQRVALASGLVLALSLLLPKAFL). Residues 29-95 (SRGKRQEPPP…AGGGGSGRGL (67 aa)) are Lumenal-facing. Positions 30–67 (RGKRQEPPPTPEGKLGRFPPMMHHHQAPSDGQTPGARF) are disordered. The chain crosses the membrane as a helical span at residues 96–116 (MGQIIPIYGFGIFLYILYILF). Residues 117 to 369 (KLSKGKTTAE…LRKRNPQGLE (253 aa)) lie on the Cytoplasmic side of the membrane. The stretch at 140-169 (RKITSFELAQLQEKLKETEAAMEKLINRVG) forms a coiled coil. Lysine 202 is modified (N6-acetyllysine; alternate). A Glycyl lysine isopeptide (Lys-Gly) (interchain with G-Cter in ubiquitin); alternate cross-link involves residue lysine 202. Disordered regions lie at residues 272 to 295 (ESDHLGWESLPTDPRAQEDNSVTS) and 316 to 369 (LAEN…QGLE). A compositionally biased stretch (basic and acidic residues) spans 332–346 (ETTKEEWSQDFKDEG). The span at 360 to 369 (LRKRNPQGLE) shows a compositional bias: basic residues.

The protein belongs to the ric-3 family. In terms of assembly, monomer and homodimer. Interacts with CHRNA7, CHRNA3, CHRNA4, CHRNB2, CHRNB4 and HTR3A. Broadly expressed, with high levels in muscle, brain, heart, pancreas and testis. In the central nervous system, highest levels are detected in the cerebellum and pituitary gland. Over-expressed in brains from patients with bipolar disease or schizophrenia. Isoform 5 is predominantly expressed in the brain.

The protein resides in the endoplasmic reticulum membrane. The protein localises to the golgi apparatus membrane. In terms of biological role, molecular chaperone which facilitates proper subunit assembly and surface trafficking of alpha-7 (CHRNA7) and alpha-8 (CHRNA8) nicotinic acetylcholine receptors. May also promote functional expression of homomeric serotoninergic 5-HT3 receptors, and of heteromeric acetylcholine receptors alpha-3/beta-2, alpha-3/beta-4, alpha-4/beta-2 and alpha-4/beta-4. The chain is Protein RIC-3 (RIC3) from Homo sapiens (Human).